The sequence spans 176 residues: Dual-action ribosomal maturation protein DarP (176 aa).

Polar residues predominate over residues 1–10 (MTVPNHQQDI). Positions 1 to 22 (MTVPNHQQDISDSDLESRPSKT) are disordered.

This sequence belongs to the DarP family.

It localises to the cytoplasm. Its function is as follows. Member of a network of 50S ribosomal subunit biogenesis factors which assembles along the 30S-50S interface, preventing incorrect 23S rRNA structures from forming. Promotes peptidyl transferase center (PTC) maturation. The sequence is that of Dual-action ribosomal maturation protein DarP from Nitrosomonas eutropha (strain DSM 101675 / C91 / Nm57).